Consider the following 1092-residue polypeptide: Rho GTPase-activating protein 7 (1092 aa).

Positions 11 to 78 constitute an SAM domain; the sequence is LTQIEAKEAC…LNKCAVMKLE (68 aa). A phosphoserine mark is found at Ser-86, Ser-89, and Ser-129. Disordered regions lie at residues 121–179, 297–330, 409–434, and 492–553; these read PKQD…DATT, RSVS…TRSL, GPGH…NSSS, and SDEG…SGVG. The segment covering 130 to 143 has biased composition (polar residues); that stretch reads PDNSRLQSATSHES. Composition is skewed to low complexity over residues 154 to 174 and 299 to 325; these read VASV…AAHS and VSNS…SPVT. The focal adhesion-targeting (FAT) stretch occupies residues 275-448; that stretch reads QLNCVEISAL…RLSIYDNVPG (174 aa). Ser-322 carries the phosphoserine modification. Basic and acidic residues predominate over residues 415-426; it reads LRRENSHDSPKE. Polar residues predominate over residues 500-512; sequence ALDSVSPCPSSPK. Positions 514 to 526 are enriched in basic and acidic residues; it reads IHLDVDHDRRTPS. A compositionally biased stretch (polar residues) spans 527–536; that stretch reads DLDSTGNSLN. Residues 615–637 form a polybasic cluster (PBR) region; that stretch reads KHGFSWAVPKFMKRIKVPDYKDR. A Rho-GAP domain is found at 642 to 848; that stretch reads VPLTVNVQRS…HMIAECKKLF (207 aa). Positions 878–1085 constitute an START domain; sequence NSDQPADYRH…RDSFSNQNTE (208 aa).

As to quaternary structure, interacts with EF1A1, facilitates EF1A1 distribution to the membrane periphery and ruffles upon growth factor stimulation and suppresses cell migration. Interacts with tensin TNS1 (via N-terminus); the interaction is decreased by phosphorylation of TNS1. Interacts with TNS3 and PTEN; in resting cells, interacts with TNS3 (via C2 tensin-type domain) but, following growth factor stimulation, TNS3 and PTEN are phosphorylated which leads to weakened interaction with TNS3 and enhanced interaction with PTEN. Interacts (via C-terminus) with tensin TNS4 (via SH2 domain); the interaction is independent of tyrosine phosphorylation of DLC1. As to expression, widely expressed with the highest levels in heart, liver and lung.

It localises to the cytoplasm. Its subcellular location is the cell junction. The protein resides in the focal adhesion. The protein localises to the membrane. In terms of biological role, functions as a GTPase-activating protein for the small GTPases RHOA, RHOB, RHOC and CDC42, terminating their downstream signaling. This induces morphological changes and detachment through cytoskeletal reorganization, playing a critical role in biological processes such as cell migration and proliferation. Also functions in vivo as an activator of the phospholipase PLCD1. Active DLC1 increases cell migration velocity but reduces directionality. Required for growth factor-induced epithelial cell migration; in resting cells, interacts with TNS3 while PTEN interacts with the p85 regulatory subunit of the PI3K kinase complex but growth factor stimulation induces phosphorylation of TNS3 and PTEN, causing them to change their binding preference so that PTEN interacts with DLC1 and TNS3 interacts with p85. The PTEN-DLC1 complex translocates to the posterior of migrating cells to activate RHOA while the TNS3-p85 complex translocates to the leading edge of migrating cells to promote RAC1 activation. The polypeptide is Rho GTPase-activating protein 7 (Dlc1) (Mus musculus (Mouse)).